The primary structure comprises 352 residues: B1 bradykinin receptor (352 aa).

Topologically, residues 1–41 (MAAQTLLELQPSNQSQLSALNTTSCDNAREAWDLLYQVLPI) are extracellular. Residues asparagine 13 and asparagine 21 are each glycosylated (N-linked (GlcNAc...) asparagine). A helical transmembrane segment spans residues 42–62 (FILTICAFGLLGNLFVLSVFL). The Cytoplasmic segment spans residues 63–72 (LLRRRLTVAE). Residues 73–93 (IYLVNLAASDLVFVLGLPFWA) form a helical membrane-spanning segment. Over 94–110 (QNIWNQFNWPFGDLLCR) the chain is Extracellular. Cysteine 109 and cysteine 188 are oxidised to a cystine. Residues 111 to 131 (VVNGVIKANLFISIFLMVAIS) form a helical membrane-spanning segment. Residues 132-153 (QDRYCVLVHPMASRRRRRRRRA) lie on the Cytoplasmic side of the membrane. Residues 154–174 (RATCMVIWAVGALLSTPTFLL) traverse the membrane as a helical segment. Topologically, residues 175 to 206 (RSVSAVQDLNISACILLLPHQAWHVARIVELN) are extracellular. A glycan (N-linked (GlcNAc...) asparagine) is linked at asparagine 184. Residues 207–227 (VLGFLLPLAAIIFFNGHILAS) traverse the membrane as a helical segment. Over 228 to 250 (LRGQGEVSQTRIGGPKDCKTTVL) the chain is Cytoplasmic. A helical membrane pass occupies residues 251–271 (ILTLVAAFLVCWAPYHCFAFL). Residues 272-294 (EFLFQVRAVRGCFWEDFIDLGLQ) are Extracellular-facing. The chain crosses the membrane as a helical span at residues 295 to 315 (LANFFAFTNSCLNPVIYVFVG). Over 316-326 (RLFRTKVWELY) the chain is Cytoplasmic. Cysteine 329 carries the S-palmitoyl cysteine lipid modification.

Belongs to the G-protein coupled receptor 1 family. Bradykinin receptor subfamily. BDKRB1 sub-subfamily.

It is found in the cell membrane. In terms of biological role, this is a receptor for bradykinin. Could be a factor in chronic pain and inflammation. This is B1 bradykinin receptor (BDKRB1) from Tupaia minor (Pigmy tree shrew).